The following is a 116-amino-acid chain: uncharacterized protein (116 aa).

The N-acetylmuramoyl-L-alanine amidase domain occupies 2 to 73 (DGSVGTGRQV…PKALICGHRD (72 aa)).

It to phage T3 and T7 N-acetylmuramoyl-L-alanine amidases.

This is an uncharacterized protein from Haemophilus influenzae (strain ATCC 51907 / DSM 11121 / KW20 / Rd).